A 295-amino-acid chain; its full sequence is Bifunctional protein FolD (295 aa).

Residues 166 to 168, Ser195, and Ile236 contribute to the NADP(+) site; that span reads GRS.

The protein belongs to the tetrahydrofolate dehydrogenase/cyclohydrolase family. As to quaternary structure, homodimer.

The enzyme catalyses (6R)-5,10-methylene-5,6,7,8-tetrahydrofolate + NADP(+) = (6R)-5,10-methenyltetrahydrofolate + NADPH. The catalysed reaction is (6R)-5,10-methenyltetrahydrofolate + H2O = (6R)-10-formyltetrahydrofolate + H(+). It functions in the pathway one-carbon metabolism; tetrahydrofolate interconversion. Functionally, catalyzes the oxidation of 5,10-methylenetetrahydrofolate to 5,10-methenyltetrahydrofolate and then the hydrolysis of 5,10-methenyltetrahydrofolate to 10-formyltetrahydrofolate. This chain is Bifunctional protein FolD, found in Chlorobium phaeovibrioides (strain DSM 265 / 1930) (Prosthecochloris vibrioformis (strain DSM 265)).